The chain runs to 301 residues: GTPase Era (301 aa).

Residues 7–175 (YCGFIAIVGR…AAIVRKHLPE (169 aa)) form the Era-type G domain. Residues 15–22 (GRPNVGKS) form a G1 region. 15 to 22 (GRPNVGKS) provides a ligand contact to GTP. A G2 region spans residues 41 to 45 (QTTRH). The G3 stretch occupies residues 62-65 (DTPG). Residues 62-66 (DTPGL) and 124-127 (NKVD) each bind GTP. A G4 region spans residues 124 to 127 (NKVD). The G5 stretch occupies residues 154 to 156 (ISA). Residues 206 to 283 (LGAELPYSVT…HLELWVKVKS (78 aa)) form the KH type-2 domain.

The protein belongs to the TRAFAC class TrmE-Era-EngA-EngB-Septin-like GTPase superfamily. Era GTPase family. In terms of assembly, monomer.

The protein resides in the cytoplasm. It is found in the cell inner membrane. Functionally, an essential GTPase that binds both GDP and GTP, with rapid nucleotide exchange. Plays a role in 16S rRNA processing and 30S ribosomal subunit biogenesis and possibly also in cell cycle regulation and energy metabolism. In Escherichia fergusonii (strain ATCC 35469 / DSM 13698 / CCUG 18766 / IAM 14443 / JCM 21226 / LMG 7866 / NBRC 102419 / NCTC 12128 / CDC 0568-73), this protein is GTPase Era.